Reading from the N-terminus, the 296-residue chain is Urease accessory protein UreD (296 aa).

The protein belongs to the UreD family. As to quaternary structure, ureD, UreF and UreG form a complex that acts as a GTP-hydrolysis-dependent molecular chaperone, activating the urease apoprotein by helping to assemble the nickel containing metallocenter of UreC. The UreE protein probably delivers the nickel.

It is found in the cytoplasm. Functionally, required for maturation of urease via the functional incorporation of the urease nickel metallocenter. The protein is Urease accessory protein UreD of Nitrosococcus oceani (strain ATCC 19707 / BCRC 17464 / JCM 30415 / NCIMB 11848 / C-107).